A 140-amino-acid polypeptide reads, in one-letter code: ATP synthase epsilon chain (140 aa).

This sequence belongs to the ATPase epsilon chain family. F-type ATPases have 2 components, CF(1) - the catalytic core - and CF(0) - the membrane proton channel. CF(1) has five subunits: alpha(3), beta(3), gamma(1), delta(1), epsilon(1). CF(0) has three main subunits: a, b and c.

Its subcellular location is the cell inner membrane. Produces ATP from ADP in the presence of a proton gradient across the membrane. The polypeptide is ATP synthase epsilon chain (Alkalilimnicola ehrlichii (strain ATCC BAA-1101 / DSM 17681 / MLHE-1)).